The sequence spans 229 residues: Orotate phosphoribosyltransferase (229 aa).

5-phospho-alpha-D-ribose 1-diphosphate is bound by residues arginine 107, lysine 108, lysine 111, histidine 113, and 133-141; that span reads EDLTTAGGS. Orotate is bound at residue threonine 137.

Belongs to the purine/pyrimidine phosphoribosyltransferase family. PyrE subfamily. Homodimer. It depends on Mg(2+) as a cofactor.

The enzyme catalyses orotidine 5'-phosphate + diphosphate = orotate + 5-phospho-alpha-D-ribose 1-diphosphate. It participates in pyrimidine metabolism; UMP biosynthesis via de novo pathway; UMP from orotate: step 1/2. In terms of biological role, catalyzes the transfer of a ribosyl phosphate group from 5-phosphoribose 1-diphosphate to orotate, leading to the formation of orotidine monophosphate (OMP). This Rhizobium etli (strain CIAT 652) protein is Orotate phosphoribosyltransferase.